A 493-amino-acid chain; its full sequence is Glycylpeptide N-tetradecanoyltransferase (493 aa).

Residue 45-48 coordinates tetradecanoyl-CoA; it reads HKFW. Positions 53–73 are disordered; the sequence is VPQITGSGAPAPIEEGPIDDP. Tetradecanoyl-CoA-binding positions include 182–184 and 190–194; these read LCV and SKRLA. Leu-493 serves as the catalytic Proton acceptor; via carboxylate.

It belongs to the NMT family. In terms of assembly, monomer.

The protein resides in the cytoplasm. The catalysed reaction is N-terminal glycyl-[protein] + tetradecanoyl-CoA = N-tetradecanoylglycyl-[protein] + CoA + H(+). Functionally, adds a myristoyl group to the N-terminal glycine residue of certain cellular proteins. This is Glycylpeptide N-tetradecanoyltransferase from Cryptococcus neoformans var. neoformans serotype D (strain B-3501A) (Filobasidiella neoformans).